A 424-amino-acid chain; its full sequence is CinA-like protein (424 aa).

It belongs to the CinA family.

In Prochlorococcus marinus (strain MIT 9312), this protein is CinA-like protein.